Here is a 429-residue protein sequence, read N- to C-terminus: Cytochrome bc1 complex Rieske iron-sulfur subunit (429 aa).

The interval 1 to 45 (MSRADDDAVGVPPTCGGRSDEEERRIVPGPNPQDGAKDGAKATAV) is disordered. 3 helical membrane-spanning segments follow: residues 96–116 (VAVW…IFLF), 137–157 (PLYG…AVLY), and 207–227 (FGVG…GGLI). A Rieske domain is found at 316–410 (RNPVMLIRIK…ITIDTDGYLV (95 aa)). Residues cysteine 353, histidine 355, cysteine 372, and histidine 375 each coordinate [2Fe-2S] cluster. A disulfide bond links cysteine 358 and cysteine 374.

Belongs to the Rieske iron-sulfur protein family. In terms of assembly, the cytochrome bc1 complex is composed of a cytochrome b (QcrB), the Rieske iron-sulfur protein (QcrA) and a diheme cytochrome c (QcrC) subunit. Requires [2Fe-2S] cluster as cofactor.

It localises to the cell membrane. In terms of biological role, iron-sulfur subunit of the cytochrome bc1 complex, an essential component of the respiratory electron transport chain required for ATP synthesis. The bc1 complex catalyzes the oxidation of menaquinol and the reduction of cytochrome c in the respiratory chain. The bc1 complex operates through a Q-cycle mechanism that couples electron transfer to generation of the proton gradient that drives ATP synthesis. In Mycobacterium tuberculosis (strain CDC 1551 / Oshkosh), this protein is Cytochrome bc1 complex Rieske iron-sulfur subunit (qcrA).